A 115-amino-acid polypeptide reads, in one-letter code: Histidine-rich carboxyl terminus protein 1 (115 aa).

A helical membrane pass occupies residues 9–29 (ALVGWITGAAVAVLLLLLLLA). Residues 86 to 115 (GLHHHHHPRHTPHHLHHHHHPHRHHPRHAR) are disordered. Basic residues predominate over residues 87–115 (LHHHHHPRHTPHHLHHHHHPHRHHPRHAR).

Its subcellular location is the membrane. In Homo sapiens (Human), this protein is Histidine-rich carboxyl terminus protein 1 (HRCT1).